The following is a 79-amino-acid chain: Small ribosomal subunit protein bS18 (79 aa).

The protein belongs to the bacterial ribosomal protein bS18 family. Part of the 30S ribosomal subunit. Forms a tight heterodimer with protein bS6.

Binds as a heterodimer with protein bS6 to the central domain of the 16S rRNA, where it helps stabilize the platform of the 30S subunit. The protein is Small ribosomal subunit protein bS18 of Ureaplasma parvum serovar 3 (strain ATCC 27815 / 27 / NCTC 11736).